We begin with the raw amino-acid sequence, 81 residues long: Exodeoxyribonuclease 7 small subunit (81 aa).

The protein belongs to the XseB family. Heterooligomer composed of large and small subunits.

The protein localises to the cytoplasm. The enzyme catalyses Exonucleolytic cleavage in either 5'- to 3'- or 3'- to 5'-direction to yield nucleoside 5'-phosphates.. Bidirectionally degrades single-stranded DNA into large acid-insoluble oligonucleotides, which are then degraded further into small acid-soluble oligonucleotides. The polypeptide is Exodeoxyribonuclease 7 small subunit (Rhodopseudomonas palustris (strain BisA53)).